A 178-amino-acid polypeptide reads, in one-letter code: Large ribosomal subunit protein uL5 (178 aa).

Alanine 2 bears the N-acetylalanine mark. Lysine 38 is covalently cross-linked (Glycyl lysine isopeptide (Lys-Gly) (interchain with G-Cter in SUMO2)). A phosphothreonine mark is found at threonine 44 and threonine 47. Lysine 52 is subject to N6-acetyllysine; alternate. A Glycyl lysine isopeptide (Lys-Gly) (interchain with G-Cter in SUMO2); alternate cross-link involves residue lysine 52. Lysine 85 is subject to N6-acetyllysine. A Glycyl lysine isopeptide (Lys-Gly) (interchain with G-Cter in SUMO2) cross-link involves residue lysine 154.

This sequence belongs to the universal ribosomal protein uL5 family. Component of the large ribosomal subunit (LSU). Part of the 5S RNP complex, which is a LSU subcomplex composed of the 5S RNA, RPL5 and RPL11. Component of a hexameric 5S RNP precursor complex, composed of 5S RNA, RRS1, RPF2/BXDC1, RPL5, RPL11 and HEATR3; this complex acts as a precursor for ribosome assembly. Interacts with PML. Interacts with MDM2 (via its RanBP2-type zinc finger domain); negatively regulates MDM2-mediated TP53 ubiquitination and degradation. Interacts with NOP53; retains RPL11 into the nucleolus.

The protein localises to the nucleus. It is found in the nucleolus. The protein resides in the cytoplasm. Component of the ribosome, a large ribonucleoprotein complex responsible for the synthesis of proteins in the cell. The small ribosomal subunit (SSU) binds messenger RNAs (mRNAs) and translates the encoded message by selecting cognate aminoacyl-transfer RNA (tRNA) molecules. The large subunit (LSU) contains the ribosomal catalytic site termed the peptidyl transferase center (PTC), which catalyzes the formation of peptide bonds, thereby polymerizing the amino acids delivered by tRNAs into a polypeptide chain. The nascent polypeptides leave the ribosome through a tunnel in the LSU and interact with protein factors that function in enzymatic processing, targeting, and the membrane insertion of nascent chains at the exit of the ribosomal tunnel. As part of the 5S RNP/5S ribonucleoprotein particle it is an essential component of the LSU, required for its formation and the maturation of rRNAs. It also couples ribosome biogenesis to p53/TP53 activation. As part of the 5S RNP it accumulates in the nucleoplasm and inhibits MDM2, when ribosome biogenesis is perturbed, mediating the stabilization and the activation of TP53. Promotes nucleolar location of PML. The chain is Large ribosomal subunit protein uL5 (RPL11) from Oryctolagus cuniculus (Rabbit).